Consider the following 131-residue polypeptide: QRFP-like peptide (131 aa).

The signal sequence occupies residues 1-25 (MGVRVMRSRICVIGLLVLMLTQSEA). The propeptide occupies 26–94 (YSFREKSWRT…DDGISPADKR (69 aa)). The tract at residues 48 to 131 (RRDGGDQAPS…RESRRSFGSD (84 aa)) is disordered. Residues 97–106 (MLQQLAQQLK) show a composition bias toward polar residues. Phe119 is modified (phenylalanine amide). Positions 120-131 (GKRESRRSFGSD) are enriched in basic and acidic residues. The propeptide occupies 123–131 (ESRRSFGSD).

It belongs to the RFamide neuropeptide family.

Its subcellular location is the secreted. Functionally, ligand for the G-protein coupled receptor QRFPR. The protein is QRFP-like peptide of Branchiostoma floridae (Florida lancelet).